The primary structure comprises 199 residues: Copper transport protein CTR4 (199 aa).

2 helical membrane passes run 62-82 (KGMFAGSIIGIFFLCVLIELI) and 152-172 (AFFVMLLGMYFNVIVLIFIFL).

The protein belongs to the copper transporter (Ctr) (TC 1.A.56) family. SLC31A subfamily.

Its subcellular location is the membrane. Functionally, required for high affinity copper (probably reduced Cu I) transport into the cell. Plays a role in fungal pathogenesis during host infection. The protein is Copper transport protein CTR4 of Cryptococcus neoformans var. grubii serotype A (strain H99 / ATCC 208821 / CBS 10515 / FGSC 9487) (Filobasidiella neoformans var. grubii).